We begin with the raw amino-acid sequence, 353 residues long: S-adenosylmethionine:tRNA ribosyltransferase-isomerase (353 aa).

This sequence belongs to the QueA family. In terms of assembly, monomer.

Its subcellular location is the cytoplasm. The catalysed reaction is 7-aminomethyl-7-carbaguanosine(34) in tRNA + S-adenosyl-L-methionine = epoxyqueuosine(34) in tRNA + adenine + L-methionine + 2 H(+). It functions in the pathway tRNA modification; tRNA-queuosine biosynthesis. In terms of biological role, transfers and isomerizes the ribose moiety from AdoMet to the 7-aminomethyl group of 7-deazaguanine (preQ1-tRNA) to give epoxyqueuosine (oQ-tRNA). The sequence is that of S-adenosylmethionine:tRNA ribosyltransferase-isomerase from Rickettsia bellii (strain RML369-C).